Here is a 673-residue protein sequence, read N- to C-terminus: UvrABC system protein B (673 aa).

One can recognise a Helicase ATP-binding domain in the interval 26-414 (ANFEAGLAKQ…AGEVTELVVR (389 aa)). 39-46 (GVTGSGKT) contacts ATP. Positions 92–115 (YYDYYQPEAYVPSSDTFIEKDSSI) match the Beta-hairpin motif. In terms of domain architecture, Helicase C-terminal spans 431–597 (QVDDLMSEVH…SVERPIADIM (167 aa)). Basic and acidic residues-rich tracts occupy residues 600–609 (ARDDAAEKKS) and 618–628 (HVAEETPDYRA). The tract at residues 600–628 (ARDDAAEKKSGKGRSKSRHVAEETPDYRA) is disordered. The UVR domain occupies 635–670 (AGKLKSLEQKMYQHAKDLEFEAAAQIRDQIQKLKAA).

This sequence belongs to the UvrB family. Forms a heterotetramer with UvrA during the search for lesions. Interacts with UvrC in an incision complex.

Its subcellular location is the cytoplasm. Functionally, the UvrABC repair system catalyzes the recognition and processing of DNA lesions. A damage recognition complex composed of 2 UvrA and 2 UvrB subunits scans DNA for abnormalities. Upon binding of the UvrA(2)B(2) complex to a putative damaged site, the DNA wraps around one UvrB monomer. DNA wrap is dependent on ATP binding by UvrB and probably causes local melting of the DNA helix, facilitating insertion of UvrB beta-hairpin between the DNA strands. Then UvrB probes one DNA strand for the presence of a lesion. If a lesion is found the UvrA subunits dissociate and the UvrB-DNA preincision complex is formed. This complex is subsequently bound by UvrC and the second UvrB is released. If no lesion is found, the DNA wraps around the other UvrB subunit that will check the other stand for damage. This is UvrABC system protein B from Xanthomonas axonopodis pv. citri (strain 306).